Consider the following 187-residue polypeptide: Large ribosomal subunit protein uL5 (187 aa).

This sequence belongs to the universal ribosomal protein uL5 family. Part of the 50S ribosomal subunit; part of the 5S rRNA/L5/L18/L25 subcomplex. Contacts the 5S rRNA and the P site tRNA. Forms a bridge to the 30S subunit in the 70S ribosome.

This is one of the proteins that bind and probably mediate the attachment of the 5S RNA into the large ribosomal subunit, where it forms part of the central protuberance. In the 70S ribosome it contacts protein S13 of the 30S subunit (bridge B1b), connecting the 2 subunits; this bridge is implicated in subunit movement. Contacts the P site tRNA; the 5S rRNA and some of its associated proteins might help stabilize positioning of ribosome-bound tRNAs. The sequence is that of Large ribosomal subunit protein uL5 from Mycobacterium bovis (strain BCG / Tokyo 172 / ATCC 35737 / TMC 1019).